We begin with the raw amino-acid sequence, 1053 residues long: DNA-directed RNA polymerase subunit beta' (1053 aa).

Zn(2+) contacts are provided by Cys-60, Cys-62, Cys-75, and Cys-78. Residues Asp-449, Asp-451, and Asp-453 each coordinate Mg(2+).

This sequence belongs to the RNA polymerase beta' chain family. The RNAP catalytic core consists of 2 alpha, 1 beta, 1 beta' and 1 omega subunit. When a sigma factor is associated with the core the holoenzyme is formed, which can initiate transcription. Requires Mg(2+) as cofactor. It depends on Zn(2+) as a cofactor.

It catalyses the reaction RNA(n) + a ribonucleoside 5'-triphosphate = RNA(n+1) + diphosphate. DNA-dependent RNA polymerase catalyzes the transcription of DNA into RNA using the four ribonucleoside triphosphates as substrates. The chain is DNA-directed RNA polymerase subunit beta' from Brochothrix thermosphacta (Microbacterium thermosphactum).